We begin with the raw amino-acid sequence, 164 residues long: Protein eva-1 homolog B (164 aa).

Residues 29–49 (GLYFVLGVCFGLLLTLCLLVI) traverse the membrane as a helical segment. The tract at residues 56 to 110 (RSRPRTPAPRRDPRSSTLEPEDEDDEEDEDTMTRLGPDDTLQGQELSTEPDGPLS) is disordered. A compositionally biased stretch (acidic residues) spans 74 to 85 (EPEDEDDEEDED). Phosphothreonine occurs at positions 86, 149, and 157.

It belongs to the EVA1 family.

The protein localises to the membrane. This Mus musculus (Mouse) protein is Protein eva-1 homolog B (Eva1b).